Reading from the N-terminus, the 953-residue chain is Zinc finger protein 507 (953 aa).

Ser-95 carries the post-translational modification Phosphoserine. 3 consecutive C2H2-type zinc fingers follow at residues 125–147 (YQCSLCKFLSSSFSVLKDHIKQH), 155–185 (LMCSECHITSRSQEELEAHVVNDHDNDANIH), and 248–270 (YRCLFCSYTCGQQRMLKTHAWKH). At Ser-427 the chain carries Phosphoserine. Positions 470–489 (KGLATDENAPPGRRRTNSES) are disordered. C2H2-type zinc fingers lie at residues 641-663 (YRCRLCHYTSGNKGYIKQHLRVH), 669-691 (YQCPICEHIADNSKDLESHMIHH), 697-720 (YQCKQCEESFHYKSQLRNHEREQH), 758-780 (YRCDVCDYTSTTYVGVRNHRRIH), and 786-808 (YRCSLCGYVCSHPPSLKSHMWKH). Residues 831 to 891 (GRVLGKTPGK…KLSPTSNTSY (61 aa)) are disordered. Positions 854–891 (TGSSENAVSSSELMSQTPSEVLGTNENEKLSPTSNTSY) are enriched in polar residues. The segment at 911–933 (FCCCICGFESTSKENLLDHMKEH) adopts a C2H2-type 9 zinc-finger fold.

The protein belongs to the krueppel C2H2-type zinc-finger protein family.

It is found in the nucleus. Its function is as follows. May be involved in transcriptional regulation. In Pongo abelii (Sumatran orangutan), this protein is Zinc finger protein 507 (ZNF507).